The primary structure comprises 178 residues: ATP-dependent protease subunit HslV (178 aa).

Thr7 is a catalytic residue. The Na(+) site is built by Gly162, Cys165, and Thr168.

The protein belongs to the peptidase T1B family. HslV subfamily. In terms of assembly, a double ring-shaped homohexamer of HslV is capped on each side by a ring-shaped HslU homohexamer. The assembly of the HslU/HslV complex is dependent on binding of ATP.

The protein localises to the cytoplasm. It carries out the reaction ATP-dependent cleavage of peptide bonds with broad specificity.. With respect to regulation, allosterically activated by HslU binding. In terms of biological role, protease subunit of a proteasome-like degradation complex believed to be a general protein degrading machinery. The polypeptide is ATP-dependent protease subunit HslV (Janthinobacterium sp. (strain Marseille) (Minibacterium massiliensis)).